The chain runs to 190 residues: Adenylate kinase (190 aa).

An ATP-binding site is contributed by 11 to 16 (GAGKGT). The tract at residues 31 to 60 (STGDIFRFNLKNDTELGKQARVFMDNGELV) is NMP. Residues T32, R37, 58–60 (ELV), 86–89 (GYPR), and Q93 contribute to the AMP site. The segment at 127 to 137 (ERGKTSGRADD) is LID. ATP is bound at residue R128. Residues R134 and R146 each contribute to the AMP site. ATP is bound at residue G174.

It belongs to the adenylate kinase family. In terms of assembly, monomer.

It localises to the cytoplasm. The enzyme catalyses AMP + ATP = 2 ADP. It functions in the pathway purine metabolism; AMP biosynthesis via salvage pathway; AMP from ADP: step 1/1. Catalyzes the reversible transfer of the terminal phosphate group between ATP and AMP. Plays an important role in cellular energy homeostasis and in adenine nucleotide metabolism. In Flavobacterium johnsoniae (strain ATCC 17061 / DSM 2064 / JCM 8514 / BCRC 14874 / CCUG 350202 / NBRC 14942 / NCIMB 11054 / UW101) (Cytophaga johnsonae), this protein is Adenylate kinase.